The following is a 199-amino-acid chain: V-type ATP synthase subunit E (199 aa).

It belongs to the V-ATPase E subunit family.

Produces ATP from ADP in the presence of a proton gradient across the membrane. The polypeptide is V-type ATP synthase subunit E (Clostridium botulinum (strain Hall / ATCC 3502 / NCTC 13319 / Type A)).